Reading from the N-terminus, the 142-residue chain is MYSFYKPFGFVNTDINKPIDKPIMSCSTHTYNNDKLVYKQFKRLTKLNNDLKKFCDDPDFVNSTFRRNIIYNIHNKRIHLIKKLSMIEPDITYNKFIIMWTKNSFNKIKSTSRKVPKEAKSDWYLYKNFVFVQGLNRHKQTV.

This is an uncharacterized protein from Acanthamoeba polyphaga (Amoeba).